Here is a 226-residue protein sequence, read N- to C-terminus: ATP synthase F(0) complex subunit a (226 aa).

Transmembrane regions (helical) follow at residues 12-32, 68-88, 97-117, 138-158, 164-184, and 189-209; these read PTMM…ILFP, WALM…LGLL, QLSM…ITGF, IPML…ALAV, ITAG…LMDI, and AFIT…VALI.

It belongs to the ATPase A chain family. As to quaternary structure, component of the ATP synthase complex composed at least of ATP5F1A/subunit alpha, ATP5F1B/subunit beta, ATP5MC1/subunit c (homooctomer), MT-ATP6/subunit a, MT-ATP8/subunit 8, ATP5ME/subunit e, ATP5MF/subunit f, ATP5MG/subunit g, ATP5MK/subunit k, ATP5MJ/subunit j, ATP5F1C/subunit gamma, ATP5F1D/subunit delta, ATP5F1E/subunit epsilon, ATP5PF/subunit F6, ATP5PB/subunit b, ATP5PD/subunit d, ATP5PO/subunit OSCP. ATP synthase complex consists of a soluble F(1) head domain (subunits alpha(3) and beta(3)) - the catalytic core - and a membrane F(0) domain - the membrane proton channel (subunits c, a, 8, e, f, g, k and j). These two domains are linked by a central stalk (subunits gamma, delta, and epsilon) rotating inside the F1 region and a stationary peripheral stalk (subunits F6, b, d, and OSCP). Interacts with DNAJC30; interaction is direct.

The protein localises to the mitochondrion inner membrane. The catalysed reaction is H(+)(in) = H(+)(out). Subunit a, of the mitochondrial membrane ATP synthase complex (F(1)F(0) ATP synthase or Complex V) that produces ATP from ADP in the presence of a proton gradient across the membrane which is generated by electron transport complexes of the respiratory chain. ATP synthase complex consist of a soluble F(1) head domain - the catalytic core - and a membrane F(1) domain - the membrane proton channel. These two domains are linked by a central stalk rotating inside the F(1) region and a stationary peripheral stalk. During catalysis, ATP synthesis in the catalytic domain of F(1) is coupled via a rotary mechanism of the central stalk subunits to proton translocation. With the subunit c (ATP5MC1), forms the proton-conducting channel in the F(0) domain, that contains two crucial half-channels (inlet and outlet) that facilitate proton movement from the mitochondrial intermembrane space (IMS) into the matrix. Protons are taken up via the inlet half-channel and released through the outlet half-channel, following a Grotthuss mechanism. The protein is ATP synthase F(0) complex subunit a of Phoca vitulina (Harbor seal).